A 136-amino-acid polypeptide reads, in one-letter code: Large ribosomal subunit protein uL22 (136 aa).

It belongs to the universal ribosomal protein uL22 family. Part of the 50S ribosomal subunit.

Functionally, this protein binds specifically to 23S rRNA; its binding is stimulated by other ribosomal proteins, e.g. L4, L17, and L20. It is important during the early stages of 50S assembly. It makes multiple contacts with different domains of the 23S rRNA in the assembled 50S subunit and ribosome. The globular domain of the protein is located near the polypeptide exit tunnel on the outside of the subunit, while an extended beta-hairpin is found that lines the wall of the exit tunnel in the center of the 70S ribosome. This chain is Large ribosomal subunit protein uL22, found in Leifsonia xyli subsp. xyli (strain CTCB07).